A 494-amino-acid polypeptide reads, in one-letter code: DEAD-box ATP-dependent RNA helicase CshA (494 aa).

The Q motif signature appears at 3–31 (ITFQDFNLSSDLMKAINRMGFEEATPIQA). Residues 34–204 (IPLGLSNKDV…ERFMTEPEHV (171 aa)) form the Helicase ATP-binding domain. Position 47–54 (47–54 (AQTGTGKT)) interacts with ATP. The short motif at 152 to 155 (DEAD) is the DEAD box element. The Helicase C-terminal domain maps to 215-375 (NIQQFYLEVQ…RMKEPTLDEA (161 aa)). The interval 413 to 494 (VTVVAAAIKM…SGDRRQKKSY (82 aa)) is required for dimerization or oligomerization. The tract at residues 429 to 494 (DTPVRLTDEA…SGDRRQKKSY (66 aa)) is disordered. The segment covering 443–452 (KRYKNQRSSK) has biased composition (basic residues). A compositionally biased stretch (basic and acidic residues) spans 473-488 (SYDKKRSNDRRSSGDR).

This sequence belongs to the DEAD box helicase family. CshA subfamily. As to quaternary structure, homodimer or oligomer. May interact with RNA helicases CshB and DbpA (DeaD). Probably a component of the RNA degradosome complex composed of rny, rnjA, rnjB, pnp, pfkA and eno, and possibly also rnpA (although rnjA and rnjB's presence is unclear). Interacts with ribosomal proteins L1 and L3 (rplA and rplC) and the protein component of RNase RnpA. Interacts with the RNA polymerase core. The cofactor is Mg(2+).

The protein resides in the cytoplasm. The protein localises to the nucleoid. It localises to the cell membrane. It catalyses the reaction ATP + H2O = ADP + phosphate + H(+). Its activity is regulated as follows. RNA helicase activity is inhibited by EDTA. The most abundant DEAD-box RNA helicase. An ATP-dependent RNA helicase with RNA-dependent ATPase activity. May work in conjunction with the cold shock proteins to ensure proper initiation of transcription at low and optimal temperatures. In vitro, unwinds dsRNA in both 5'- and 3'- directions. Plays a role in ribosomal 50S subunit assembly. Its deletion leads to changes in mRNA levels for over 200 transcripts. In Bacillus subtilis (strain 168), this protein is DEAD-box ATP-dependent RNA helicase CshA.